Reading from the N-terminus, the 806-residue chain is Hyperosmolality-gated Ca2+ permeable channel 1.8 (806 aa).

A run of 10 helical transmembrane segments spans residues 7–27 (IGVS…AFAV), 102–122 (IYTL…VVLV), 157–177 (KFFF…FMLY), 375–395 (LVIG…IAFV), 427–447 (FLPG…LLIM), 467–487 (YYYF…TAFE), 512–532 (ATFF…GEIL), 576–596 (FLLG…ILIF), 626–646 (VHGR…GLLA), and 650–670 (AADS…FHKY). The tract at residues 726–786 (SSSSSSEKET…HYASAYEQSS (61 aa)) is disordered. A compositionally biased stretch (basic and acidic residues) spans 731 to 750 (SEKETHQEETPEVRVDKHET). A Phosphothreonine modification is found at Thr735. Residues 751 to 762 (QSSSPVTELGTS) are compositionally biased toward polar residues. The span at 775–786 (SSHYASAYEQSS) shows a compositional bias: low complexity.

Belongs to the CSC1 (TC 1.A.17) family.

It localises to the golgi apparatus membrane. The protein resides in the cell membrane. Its function is as follows. Acts as an osmosensitive calcium-permeable cation channel. This is Hyperosmolality-gated Ca2+ permeable channel 1.8 from Arabidopsis thaliana (Mouse-ear cress).